The primary structure comprises 295 residues: Trimeric intracellular cation channel type A (295 aa).

Residues 1-11 (MELLSALSLDD) lie on the Lumenal side of the membrane. The helical transmembrane segment at 12 to 32 (LAVAFSKLPVFPLFDVAYYII) threads the bilayer. At 33 to 51 (SILYLKYEPGAVDLSKRSP) the chain is on the cytoplasmic side. A helical transmembrane segment spans residues 52–72 (VASWLCAMLYCFGSYILADVL). The Lumenal portion of the chain corresponds to 73-84 (LGESPIHYFSNN). Gly74 serves as a coordination point for Ca(2+). A helical membrane pass occupies residues 85 to 105 (ANILLASAVWYLTFFCPLNIF). Topologically, residues 106–144 (YKIVSFLPLKLVLVGMKEVVRVRKIAMGIHHAHHHYHHG) are cytoplasmic. A 1,2-diacyl-sn-glycero-3-phospho-(1D-myo-inositol-4,5-bisphosphate) is bound by residues Lys122 and Arg126. Residues 145 to 165 (WVIMVLIGWVKGSGVALMSNL) form a helical membrane-spanning segment. Topologically, residues 166–178 (EQLLRGVWKPETN) are lumenal. Residues 179-199 (EILHMSFPTKASLYGAILFTL) traverse the membrane as a helical segment. Residues 200–201 (QQ) lie on the Cytoplasmic side of the membrane. The chain crosses the membrane as a helical span at residues 202–222 (AHWLPISKAYLIFFFTLFMAI). The Lumenal portion of the chain corresponds to 223–233 (CKIYMTATHSH). A helical transmembrane segment spans residues 234 to 254 (GSPFAIFESGICCVLFGAANG). The Cytoplasmic portion of the chain corresponds to 255–295 (DHDDHGDHHHHHDDHDVSHSTVKSKEELNEGTRKRKTKKAE). Positions 259–286 (HGDHHHHHDDHDVSHSTVKSKEELNEGT) are enriched in basic and acidic residues. The disordered stretch occupies residues 259-295 (HGDHHHHHDDHDVSHSTVKSKEELNEGTRKRKTKKAE).

Belongs to the TMEM38 family. In terms of assembly, homotrimer; conformation seems to be controled by binding to diacylglycerol (DAG).

The protein resides in the sarcoplasmic reticulum membrane. Its subcellular location is the nucleus membrane. It catalyses the reaction K(+)(in) = K(+)(out). Its activity is regulated as follows. Channel activity is activated by a change of voltage within the sarcoplasmic reticulum lumen and blocked by luminal high Ca(2+) levels. Its function is as follows. Intracellular monovalent cation channel required for maintenance of rapid intracellular calcium release. Acts as a potassium counter-ion channel that functions in synchronization with calcium release from intracellular stores. Opened by a change of voltage within the sarcoplasmic reticulum lumen. This Xenopus tropicalis (Western clawed frog) protein is Trimeric intracellular cation channel type A (tmem38a).